Here is a 214-residue protein sequence, read N- to C-terminus: Octanoyltransferase (214 aa).

Positions 28 to 210 (GTAEDALYLL…EFGKVFTDTA (183 aa)) constitute a BPL/LPL catalytic domain. Residues 73–80 (RGGNITCH), 140–142 (SIG), and 153–155 (GLS) contribute to the substrate site. Cys-171 serves as the catalytic Acyl-thioester intermediate.

Belongs to the LipB family.

The protein resides in the cytoplasm. It carries out the reaction octanoyl-[ACP] + L-lysyl-[protein] = N(6)-octanoyl-L-lysyl-[protein] + holo-[ACP] + H(+). It participates in protein modification; protein lipoylation via endogenous pathway; protein N(6)-(lipoyl)lysine from octanoyl-[acyl-carrier-protein]: step 1/2. Functionally, catalyzes the transfer of endogenously produced octanoic acid from octanoyl-acyl-carrier-protein onto the lipoyl domains of lipoate-dependent enzymes. Lipoyl-ACP can also act as a substrate although octanoyl-ACP is likely to be the physiological substrate. The polypeptide is Octanoyltransferase (Maridesulfovibrio salexigens (strain ATCC 14822 / DSM 2638 / NCIMB 8403 / VKM B-1763) (Desulfovibrio salexigens)).